Here is a 422-residue protein sequence, read N- to C-terminus: Histidine--tRNA ligase (422 aa).

This sequence belongs to the class-II aminoacyl-tRNA synthetase family. As to quaternary structure, homodimer.

Its subcellular location is the cytoplasm. It carries out the reaction tRNA(His) + L-histidine + ATP = L-histidyl-tRNA(His) + AMP + diphosphate + H(+). This chain is Histidine--tRNA ligase, found in Vibrio campbellii (strain ATCC BAA-1116).